Reading from the N-terminus, the 115-residue chain is ATP-dependent Clp protease adapter protein ClpS (115 aa).

This sequence belongs to the ClpS family. Binds to the N-terminal domain of the chaperone ClpA.

Its function is as follows. Involved in the modulation of the specificity of the ClpAP-mediated ATP-dependent protein degradation. The protein is ATP-dependent Clp protease adapter protein ClpS of Leptothrix cholodnii (strain ATCC 51168 / LMG 8142 / SP-6) (Leptothrix discophora (strain SP-6)).